The chain runs to 251 residues: 7-cyano-7-deazaguanine synthase (251 aa).

The segment at 1-21 is disordered; the sequence is MSDLPRHSPRRQHAGESAVTA. An ATP-binding site is contributed by 35–45; that stretch reads YSGGMDSYTVL. Positions 212, 220, 223, and 226 each coordinate Zn(2+).

It belongs to the QueC family. Zn(2+) is required as a cofactor.

The catalysed reaction is 7-carboxy-7-deazaguanine + NH4(+) + ATP = 7-cyano-7-deazaguanine + ADP + phosphate + H2O + H(+). It participates in purine metabolism; 7-cyano-7-deazaguanine biosynthesis. In terms of biological role, catalyzes the ATP-dependent conversion of 7-carboxy-7-deazaguanine (CDG) to 7-cyano-7-deazaguanine (preQ(0)). The protein is 7-cyano-7-deazaguanine synthase of Chromohalobacter salexigens (strain ATCC BAA-138 / DSM 3043 / CIP 106854 / NCIMB 13768 / 1H11).